The following is a 313-amino-acid chain: Ribonuclease Z (313 aa).

The Zn(2+) site is built by H62, H64, D66, H67, H142, D212, and H270. D66 functions as the Proton acceptor in the catalytic mechanism.

The protein belongs to the RNase Z family. As to quaternary structure, homodimer. Zn(2+) serves as cofactor.

It catalyses the reaction Endonucleolytic cleavage of RNA, removing extra 3' nucleotides from tRNA precursor, generating 3' termini of tRNAs. A 3'-hydroxy group is left at the tRNA terminus and a 5'-phosphoryl group is left at the trailer molecule.. Its function is as follows. Zinc phosphodiesterase, which displays some tRNA 3'-processing endonuclease activity. Probably involved in tRNA maturation, by removing a 3'-trailer from precursor tRNA. In Cytophaga hutchinsonii (strain ATCC 33406 / DSM 1761 / CIP 103989 / NBRC 15051 / NCIMB 9469 / D465), this protein is Ribonuclease Z.